We begin with the raw amino-acid sequence, 633 residues long: Hyphal wall protein 1 (633 aa).

The signal sequence occupies residues 1 to 27 (MRLSTAQLIAIAYYMLSIGATVPQVDG). Disordered stretches follow at residues 40 to 306 (SYDY…TTTT) and 411 to 569 (CPLT…SGAI). A compositionally biased stretch (low complexity) spans 42–114 (DYYQEPCDDY…DYPQQPQEPC (73 aa)). One copy of the 1; approximate repeat lies at 46–58 (EPCDDYPQQQQQQ). The 14 X 10 AA tandem repeats of [EVIQ]-P-[CDT]-D-[YNW]-P-[PQ]-[QI]-[QP]-[QDN] stretch occupies residues 46-187 (EPCDDYPQQQ…PNIPTDWIPD (142 aa)). The stretch at 59-69 (EPCDYPQQQQQ) is one 2; approximate repeat. One copy of the 3; approximate repeat lies at 70–81 (EEPCDYPQQQPQ). 9 tandem repeats follow at residues 82–91 (EPCDYPQQPQ), 92–101 (EPCDYPQQPQ), 102–111 (EPCDYPQQPQ), 112–121 (EPCDNPPQPD), 122–131 (VPCDNPPQPD), 132–141 (VPCDNPPQPD), 142–151 (IPCDNPPQPD), 152–161 (IPCDNPPQPD), and 162–171 (QPDDNPPIPN). The span at 115–171 (DNPPQPDVPCDNPPQPDVPCDNPPQPDIPCDNPPQPDIPCDNPPQPDQPDDNPPIPN) shows a compositional bias: pro residues. One copy of the 13; truncated repeat lies at 172–179 (IPTDWIPN). Low complexity-rich tracts occupy residues 172–183 (IPTDWIPNIPTD) and 193–306 (TTPA…TTTT). A 14; truncated repeat occupies 180–187 (IPTDWIPD). N-linked (GlcNAc...) asparagine glycosylation is found at asparagine 240 and asparagine 285. Residues 414 to 425 (TENTPGTDSTPE) show a composition bias toward polar residues. A compositionally biased stretch (low complexity) spans 507–549 (ETKPAAPKSSAPATEPSPVAPGTESAPAGPGASSSPKSSVLAS). N-linked (GlcNAc...) asparagine glycosylation occurs at asparagine 600. The GPI-anchor amidated glycine moiety is linked to residue glycine 612. Positions 613–633 (AGNNMRLTFGAAIIGIAAFLI) are cleaved as a propeptide — removed in mature form.

Belongs to the HWP1 family. Post-translationally, the GPI-anchor is attached to the protein in the endoplasmic reticulum and serves to target the protein to the cell surface. There, the glucosamine-inositol phospholipid moiety is cleaved off and the GPI-modified mannoprotein is covalently attached via its lipidless GPI glycan remnant to the 1,6-beta-glucan of the outer cell wall layer. N- and O-glycosylated.

The protein localises to the secreted. The protein resides in the cell wall. It is found in the membrane. Its function is as follows. Major hyphal cell wall protein which plays a role of adhesin and is required for mating, normal hyphal development, cell-to-cell adhesive functions necessary for biofilm integrity, attachment to host, and virulence. Promotes interactions with host and bacterial molecules, thus leading to effective colonization within polymicrobial communities. Plays a crucial role in gastrointestinal colonization, in mucosal symptomatic and asymptomatic infections, in vaginitis, as well as in lethal oroesophageal candidiasis, caused by the combined action of fungal virulence factors and host inflammatory responses when protective immunity is absent. In Candida albicans (strain WO-1) (Yeast), this protein is Hyphal wall protein 1.